A 445-amino-acid polypeptide reads, in one-letter code: MKEIEALKEQYPLVNNLIATEEVFWVNPNMEKYETAIKNSPLNEEHVKDAEERLKRFAPYIAKVFPETKETGGIIESPLVKISSMKQSLEKNYEQPILGELLLKCDSHLPISGSIKARGGIYEVLKHAEQLALQHGMLTEKDDYSILDSDRFRGFFAKYSIAVGSTGNLGLSIGIMSAKLGFNVTVHMSADAKQWKKDLLRSKGVNVIEYEADYSKAVEEGRLQADADPSCYFVDDENSHDLFLGYAVAASRLQKQLEELEIVVDEEHPLFVYLPCGVGGGPGGVAFGLKLLYKDNVHCFFAEPTHSPCMLLGLMTGLHDKIAVQDIGIDNVTDADGLAVGRPSGFVGKTMEPFLSGNYTVSDEELYRLLKELADTENIYLEPSALAGMIGPLNVCKAENEYLQKQQLTEKVKKGTHIVWGTGGSMVPEDVMNGYYKKGLELTCK.

N6-(pyridoxal phosphate)lysine is present on lysine 116.

It belongs to the serine/threonine dehydratase family. DsdA subfamily. It depends on pyridoxal 5'-phosphate as a cofactor.

The catalysed reaction is D-serine = pyruvate + NH4(+). The protein is Probable D-serine dehydratase of Bacillus mycoides (strain KBAB4) (Bacillus weihenstephanensis).